Reading from the N-terminus, the 456-residue chain is tRNA modification GTPase MnmE (456 aa).

Residues Arg-25, Glu-82, and Lys-121 each contribute to the (6S)-5-formyl-5,6,7,8-tetrahydrofolate site. Residues 217–379 form the TrmE-type G domain; that stretch reads GIKVVIIGKP…LLDEIVKIAG (163 aa). Asn-227 serves as a coordination point for K(+). GTP contacts are provided by residues 227-232, 246-252, and 271-274; these read NAGKSS, TDIAGTT, and DTAG. Ser-231 lines the Mg(2+) pocket. K(+)-binding residues include Thr-246, Ile-248, and Thr-251. Residue Thr-252 participates in Mg(2+) binding. Lys-456 is a binding site for (6S)-5-formyl-5,6,7,8-tetrahydrofolate.

Belongs to the TRAFAC class TrmE-Era-EngA-EngB-Septin-like GTPase superfamily. TrmE GTPase family. In terms of assembly, homodimer. Heterotetramer of two MnmE and two MnmG subunits. K(+) serves as cofactor.

It is found in the cytoplasm. Exhibits a very high intrinsic GTPase hydrolysis rate. Involved in the addition of a carboxymethylaminomethyl (cmnm) group at the wobble position (U34) of certain tRNAs, forming tRNA-cmnm(5)s(2)U34. This chain is tRNA modification GTPase MnmE, found in Endomicrobium trichonymphae.